The sequence spans 644 residues: Threonine--tRNA ligase (644 aa).

One can recognise a TGS domain in the interval 1–61; that stretch reads MVAITLPDGN…TQDASVEIVT (61 aa). A catalytic region spans residues 242–533; that stretch reads DHRKIGKALN…LIEHYAGWMP (292 aa). Zn(2+) contacts are provided by cysteine 333, histidine 384, and histidine 510.

The protein belongs to the class-II aminoacyl-tRNA synthetase family. In terms of assembly, homodimer. Requires Zn(2+) as cofactor.

The protein localises to the cytoplasm. The enzyme catalyses tRNA(Thr) + L-threonine + ATP = L-threonyl-tRNA(Thr) + AMP + diphosphate + H(+). Functionally, catalyzes the attachment of threonine to tRNA(Thr) in a two-step reaction: L-threonine is first activated by ATP to form Thr-AMP and then transferred to the acceptor end of tRNA(Thr). Also edits incorrectly charged L-seryl-tRNA(Thr). This Psychrobacter sp. (strain PRwf-1) protein is Threonine--tRNA ligase.